The primary structure comprises 233 residues: Large ribosomal subunit protein uL1 (233 aa).

This sequence belongs to the universal ribosomal protein uL1 family. In terms of assembly, part of the 50S ribosomal subunit.

Functionally, binds directly to 23S rRNA. The L1 stalk is quite mobile in the ribosome, and is involved in E site tRNA release. Protein L1 is also a translational repressor protein, it controls the translation of the L11 operon by binding to its mRNA. This chain is Large ribosomal subunit protein uL1, found in Vibrio campbellii (strain ATCC BAA-1116).